A 154-amino-acid chain; its full sequence is Ascorbate-specific PTS system EIIA component (154 aa).

Residues 6-150 (SLAENKSIRL…QEVLDLIDRT (145 aa)) form the PTS EIIA type-2 domain. The Tele-phosphohistidine intermediate role is filled by His-68. His-68 carries the post-translational modification Phosphohistidine.

It is found in the cytoplasm. The phosphoenolpyruvate-dependent sugar phosphotransferase system (sugar PTS), a major carbohydrate active transport system, catalyzes the phosphorylation of incoming sugar substrates concomitantly with their translocation across the cell membrane. The enzyme II UlaABC PTS system is involved in ascorbate transport. The protein is Ascorbate-specific PTS system EIIA component (ulaC) of Escherichia coli O157:H7.